Reading from the N-terminus, the 126-residue chain is Large ribosomal subunit protein bL12 (126 aa).

It belongs to the bacterial ribosomal protein bL12 family. Homodimer. Part of the ribosomal stalk of the 50S ribosomal subunit. Forms a multimeric L10(L12)X complex, where L10 forms an elongated spine to which 2 to 4 L12 dimers bind in a sequential fashion. Binds GTP-bound translation factors.

Functionally, forms part of the ribosomal stalk which helps the ribosome interact with GTP-bound translation factors. Is thus essential for accurate translation. This Streptococcus pyogenes serotype M28 (strain MGAS6180) protein is Large ribosomal subunit protein bL12.